Reading from the N-terminus, the 186-residue chain is Large ribosomal subunit protein uL5 (186 aa).

This sequence belongs to the universal ribosomal protein uL5 family. As to quaternary structure, part of the 50S ribosomal subunit; part of the 5S rRNA/L5/L18/L25 subcomplex. Contacts the 5S rRNA and the P site tRNA. Forms a bridge to the 30S subunit in the 70S ribosome.

In terms of biological role, this is one of the proteins that bind and probably mediate the attachment of the 5S RNA into the large ribosomal subunit, where it forms part of the central protuberance. In the 70S ribosome it contacts protein S13 of the 30S subunit (bridge B1b), connecting the 2 subunits; this bridge is implicated in subunit movement. Contacts the P site tRNA; the 5S rRNA and some of its associated proteins might help stabilize positioning of ribosome-bound tRNAs. The chain is Large ribosomal subunit protein uL5 from Ruegeria pomeroyi (strain ATCC 700808 / DSM 15171 / DSS-3) (Silicibacter pomeroyi).